A 1438-amino-acid polypeptide reads, in one-letter code: DNA polymerase III PolC-type (1438 aa).

Positions 422–578 (YVVFDVETTG…YDTEATAYIF (157 aa)) constitute an Exonuclease domain.

The protein belongs to the DNA polymerase type-C family. PolC subfamily.

The protein localises to the cytoplasm. The enzyme catalyses DNA(n) + a 2'-deoxyribonucleoside 5'-triphosphate = DNA(n+1) + diphosphate. Its function is as follows. Required for replicative DNA synthesis. This DNA polymerase also exhibits 3' to 5' exonuclease activity. The chain is DNA polymerase III PolC-type from Staphylococcus aureus (strain MRSA252).